The primary structure comprises 171 residues: UPF0763 protein KHP_0657 (171 aa).

This sequence belongs to the UPF0763 family.

This is UPF0763 protein KHP_0657 from Helicobacter pylori (strain 51).